We begin with the raw amino-acid sequence, 359 residues long: Peptide chain release factor 1 (359 aa).

The residue at position 235 (Gln235) is an N5-methylglutamine. The interval 280–306 (AERQRADSERSADRKSQVGSGDRSERI) is disordered.

It belongs to the prokaryotic/mitochondrial release factor family. In terms of processing, methylated by PrmC. Methylation increases the termination efficiency of RF1.

The protein resides in the cytoplasm. Functionally, peptide chain release factor 1 directs the termination of translation in response to the peptide chain termination codons UAG and UAA. The chain is Peptide chain release factor 1 from Rhizobium leguminosarum bv. trifolii (strain WSM2304).